A 233-amino-acid polypeptide reads, in one-letter code: Phosphoribosylaminoimidazole-succinocarboxamide synthase (233 aa).

Belongs to the SAICAR synthetase family.

The enzyme catalyses 5-amino-1-(5-phospho-D-ribosyl)imidazole-4-carboxylate + L-aspartate + ATP = (2S)-2-[5-amino-1-(5-phospho-beta-D-ribosyl)imidazole-4-carboxamido]succinate + ADP + phosphate + 2 H(+). It participates in purine metabolism; IMP biosynthesis via de novo pathway; 5-amino-1-(5-phospho-D-ribosyl)imidazole-4-carboxamide from 5-amino-1-(5-phospho-D-ribosyl)imidazole-4-carboxylate: step 1/2. In Thermococcus sibiricus (strain DSM 12597 / MM 739), this protein is Phosphoribosylaminoimidazole-succinocarboxamide synthase.